A 260-amino-acid chain; its full sequence is DNA repair protein RecO (260 aa).

It belongs to the RecO family.

Involved in DNA repair and RecF pathway recombination. This is DNA repair protein RecO from Chlorobaculum parvum (strain DSM 263 / NCIMB 8327) (Chlorobium vibrioforme subsp. thiosulfatophilum).